Consider the following 640-residue polypeptide: Threonine--tRNA ligase (640 aa).

One can recognise a TGS domain in the interval Met1–Thr61. The interval Asp243–Pro534 is catalytic. Residues Cys334, His385, and His511 each contribute to the Zn(2+) site.

Belongs to the class-II aminoacyl-tRNA synthetase family. As to quaternary structure, homodimer. Zn(2+) serves as cofactor.

The protein localises to the cytoplasm. It catalyses the reaction tRNA(Thr) + L-threonine + ATP = L-threonyl-tRNA(Thr) + AMP + diphosphate + H(+). In terms of biological role, catalyzes the attachment of threonine to tRNA(Thr) in a two-step reaction: L-threonine is first activated by ATP to form Thr-AMP and then transferred to the acceptor end of tRNA(Thr). Also edits incorrectly charged L-seryl-tRNA(Thr). The polypeptide is Threonine--tRNA ligase (Dichelobacter nodosus (strain VCS1703A)).